Consider the following 61-residue polypeptide: MEWLADYWWIILLILVGMIISGIKELRRVDVKRYLADKPELPPHRDNNAEWDDDDDWPKKK.

A helical membrane pass occupies residues 3-23 (WLADYWWIILLILVGMIISGI). A compositionally biased stretch (basic and acidic residues) spans 38–48 (KPELPPHRDNN). The interval 38-61 (KPELPPHRDNNAEWDDDDDWPKKK) is disordered. The span at 49 to 61 (AEWDDDDDWPKKK) shows a compositional bias: acidic residues.

Belongs to the UPF0370 family.

It localises to the cell membrane. The sequence is that of UPF0370 protein Spro_3503 from Serratia proteamaculans (strain 568).